The sequence spans 261 residues: 1-(5-phosphoribosyl)-5-[(5-phosphoribosylamino)methylideneamino] imidazole-4-carboxamide isomerase (261 aa).

Belongs to the HisA/HisF family.

It localises to the cytoplasm. It catalyses the reaction 1-(5-phospho-beta-D-ribosyl)-5-[(5-phospho-beta-D-ribosylamino)methylideneamino]imidazole-4-carboxamide = 5-[(5-phospho-1-deoxy-D-ribulos-1-ylimino)methylamino]-1-(5-phospho-beta-D-ribosyl)imidazole-4-carboxamide. It functions in the pathway amino-acid biosynthesis; L-histidine biosynthesis; L-histidine from 5-phospho-alpha-D-ribose 1-diphosphate: step 4/9. In terms of biological role, catalyzes the isomerization of the aminoaldose moiety of ProFAR to the aminoketose of PRFAR. This chain is 1-(5-phosphoribosyl)-5-[(5-phosphoribosylamino)methylideneamino] imidazole-4-carboxamide isomerase, found in Saccharomyces cerevisiae (strain ATCC 204508 / S288c) (Baker's yeast).